Here is a 270-residue protein sequence, read N- to C-terminus: Myelin protein zero-like protein 1 (270 aa).

An N-terminal signal peptide occupies residues 1–35; that stretch reads MAEAVGAVALIAAPARRRWLWSVLAAMLGLLTARI. The Ig-like V-type domain occupies 36-151; it reads SALEVHTPKE…DIVVRPGHIR (116 aa). Topologically, residues 36–162 are extracellular; the sequence is SALEVHTPKE…HVVEIDNLLV (127 aa). N-linked (GlcNAc...) asparagine glycans are attached at residues Asn-50 and Asn-130. Residues Cys-58 and Cys-135 are joined by a disulfide bond. Residues 163-183 form a helical membrane-spanning segment; the sequence is FLVWVVVGTVTAVVLGLTLLI. The Cytoplasmic segment spans residues 184 to 270; the sequence is SLVLVVLYRR…SVVYADIRKD (87 aa). The interval 201 to 257 is disordered; the sequence is TGCSTSERLSPVKQAPRKCPSDTEGLVKSPPSAGSHQGPVIYAQLDHSGGHHSGKIN. Ser-204, Ser-206, Ser-210, and Ser-221 each carry phosphoserine. Residues 240 to 245 carry the ITIM motif 1 motif; it reads VIYAQL. At Tyr-242 the chain carries Phosphotyrosine. Ser-261 carries the phosphoserine modification. Residues 262–267 carry the ITIM motif 2 motif; the sequence is VVYADI. A Phosphotyrosine modification is found at Tyr-264.

Belongs to the myelin P0 protein family. In terms of assembly, interacts with phosphorylated PTPN11/SHP-2. In terms of processing, phosphorylated on tyrosine residues upon stimulation with pervanadate and concanavalin-A (ConA). Phosphorylation at Tyr-242 and Tyr-264 is required for interaction with PTPN11/SHP-2. Dephosphorylated by PTPN11/SHP-2 (in vitro).

Its subcellular location is the membrane. In terms of biological role, cell surface receptor, which is involved in signal transduction processes. Recruits PTPN11/SHP-2 to the cell membrane and is a putative substrate of PTPN11/SHP-2. Is a major receptor for concanavalin-A (ConA) and is involved in cellular signaling induced by ConA, which probably includes Src family tyrosine-protein kinases. Isoform 2 seems to have a dominant negative role; it blocks tyrosine phosphorylation of MPZL1 induced by ConA. Isoform 1, but not isoform 2, may be involved in regulation of integrin-mediated cell motility. This Mus musculus (Mouse) protein is Myelin protein zero-like protein 1 (Mpzl1).